Reading from the N-terminus, the 339-residue chain is Fructose-1,6-bisphosphatase isozyme 2 (339 aa).

The segment at 3–10 (DRSPFETD) is important for interaction with ALDOA. Residues valine 18 and 28-32 (TGELT) contribute to the AMP site. 2 residues coordinate Mg(2+): aspartate 69 and glutamate 98. 113-114 (KY) serves as a coordination point for AMP. Mg(2+) is bound by residues aspartate 119, leucine 121, and aspartate 122. Substrate is bound at residue aspartate 122. Arginine 141 serves as a coordination point for AMP. The Nuclear localization signal motif lies at 204-208 (KKKGK). 213-216 (NEGY) serves as a coordination point for substrate. Phosphotyrosine occurs at positions 216 and 219. Residues 245–249 (YVGSM), tyrosine 265, and lysine 275 contribute to the substrate site. Glutamate 281 provides a ligand contact to Mg(2+).

This sequence belongs to the FBPase class 1 family. In terms of assembly, homotetramer. Interacts with ALDOA; the interaction blocks inhibition by physiological concentrations of AMP and reduces inhibition by Ca(2+). Interacts with alpha-actinin and F-actin. Mg(2+) serves as cofactor.

Its subcellular location is the cell junction. It is found in the cytoplasm. It localises to the nucleus. The protein localises to the myofibril. The protein resides in the sarcomere. Its subcellular location is the z line. The enzyme catalyses beta-D-fructose 1,6-bisphosphate + H2O = beta-D-fructose 6-phosphate + phosphate. It functions in the pathway carbohydrate biosynthesis; gluconeogenesis. With respect to regulation, subject to complex allosteric regulation. The enzyme can assume an active R-state, or an inactive T-state. Intermediate conformations may exist. AMP acts as an allosteric inhibitor. Fructose 2,6-bisphosphate acts as a competitive inhibitor. Strongly inhibited by Ca(2+). Its function is as follows. Catalyzes the hydrolysis of fructose 1,6-bisphosphate to fructose 6-phosphate in the presence of divalent cations and probably participates in glycogen synthesis from carbohydrate precursors, such as lactate. In Bos taurus (Bovine), this protein is Fructose-1,6-bisphosphatase isozyme 2 (FBP2).